The following is a 965-amino-acid chain: MEGKVFLGHNLIWVMLLMGQLHGYKSCIDEEKIALFELRKHMISRTESESVLPTWTNDTTSDCCRWKGVACNRVSGRVTEISFGGLSLKDNSLLNLSLLHPFEDVRSLNLSSSRCSGLFDDVEGYKSLRKLRKLEILDLASNKFNNSIFHFLSAATSLTTLFLRSNNMDGSFPAKELRDLTNLELLDLSRNRFNGSIPIQELSSLRKLKALDLSGNEFSGSMELQGKFCTDLLFSIQSGICELNNMQELDLSQNKLVGHLPSCLTSLTGLRVLDLSSNKLTGTVPSSLGSLQSLEYLSLFDNDFEGSFSFGSLANLSNLMVLKLCSKSSSLQVLSESSWKPKFQLSVIALRSCNMEKVPHFLLHQKDLRHVDLSDNNISGKLPSWLLANNTKLKVLLLQNNLFTSFQIPKSAHNLLFLDVSANDFNHLFPENIGWIFPHLRYLNTSKNNFQENLPSSLGNMNGIQYMDLSRNSFHGNLPRSFVNGCYSMAILKLSHNKLSGEIFPESTNFTNILGLFMDNNLFTGKIGQGLRSLINLELLDMSNNNLTGVIPSWIGELPSLTALLISDNFLKGDIPMSLFNKSSLQLLDLSANSLSGVIPPQHDSRNGVVLLLQDNKLSGTIPDTLLANVEILDLRNNRFSGKIPEFINIQNISILLLRGNNFTGQIPHQLCGLSNIQLLDLSNNRLNGTIPSCLSNTSFGFGKECTSYDYDFGISFPSDVFNGFSLHQDFSSNKNGGIYFKSLLTLDPLSMDYKAATQTKIEFATKHRYDAYMGGNLKLLFGMDLSENELSGEIPVEFGGLLELRALNLSHNNLSGVIPKSISSMEKMESFDLSFNRLQGRIPSQLTELTSLSVFKVSHNNLSGVIPQGRQFNTFDAESYFGNRLLCGQPTNRSCNNNSYEEADNGVEADESIIDMVSFYLSFAAAYVTILIGILASLSFDSPWSRFWFYKVDAFIKKVRNLLL.

Residues 1-23 (MEGKVFLGHNLIWVMLLMGQLHG) form the signal peptide. Residues 24–916 (YKSCIDEEKI…GVEADESIID (893 aa)) lie on the Extracellular side of the membrane. N-linked (GlcNAc...) asparagine glycans are attached at residues Asn57, Asn95, Asn109, and Asn145. LRR repeat units lie at residues 80–102 (EISFGGLSLKDNSLLNLSLLHPF), 103–127 (EDVRSLNLSSSRCSGLFDDVEGYKS), 131–154 (LRKLEILDLASNKFNNSIFHFLSA), 156–179 (TSLTTLFLRSNNMDGSFPAKELRD), 180–204 (LTNLELLDLSRNRFNGSIPIQELSS), 206–230 (RKLKALDLSGNEFSGSMELQGKFCT), 243–267 (LNNMQELDLSQNKLVGHLPSCLTSL), 268–290 (TGLRVLDLSSNKLTGTVPSSLGS), 292–315 (QSLEYLSLFDNDFEGSFSFGSLAN), 316–341 (LSNLMVLKLCSKSSSLQVLSESSWKP), 342–365 (KFQLSVIALRSCNMEKVPHFLLHQ), 366–389 (KDLRHVDLSDNNISGKLPSWLLAN), 391–415 (TKLKVLLLQNNLFTSFQIPKSAHNL), 417–435 (FLDVSANDFNHLFPENIGW), 437–461 (FPHLRYLNTSKNNFQENLPSSLGNM), 462–485 (NGIQYMDLSRNSFHGNLPRSFVNG), and 487–512 (YSMAILKLSHNKLSGEIFPESTNFTN). Asn194 is a glycosylation site (N-linked (GlcNAc...) asparagine). A glycan (N-linked (GlcNAc...) asparagine) is linked at Asn315. N-linked (GlcNAc...) asparagine glycosylation is found at Asn377 and Asn389. The N-linked (GlcNAc...) asparagine glycan is linked to Asn444. An N-linked (GlcNAc...) asparagine glycan is attached at Asn509. Residues 514–533 (LGLFMDNNLFTGKIGQGLRS) form an LRR 18; degenerate repeat. 11 LRR repeats span residues 534–557 (LINLELLDMSNNNLTGVIPSWIGE), 558–582 (LPSLTALLISDNFLKGDIPMSLFNK), 584–606 (SLQLLDLSANSLSGVIPPQHDSR), 608–627 (GVVLLLQDNKLSGTIPDTLL), 628–652 (ANVEILDLRNNRFSGKIPEFINIQN), 654–674 (SILLLRGNNFTGQIPHQLCGL), 675–698 (SNIQLLDLSNNRLNGTIPSCLSNT), 778–801 (LKLLFGMDLSENELSGEIPVEFGG), 802–825 (LLELRALNLSHNNLSGVIPKSISS), 827–850 (EKMESFDLSFNRLQGRIPSQLTEL), and 851–875 (TSLSVFKVSHNNLSGVIPQGRQFNT). N-linked (GlcNAc...) asparagine glycosylation is found at Asn546 and Asn581. N-linked (GlcNAc...) asparagine glycans are attached at residues Asn652, Asn662, Asn688, and Asn697. 2 N-linked (GlcNAc...) asparagine glycosylation sites follow: Asn809 and Asn814. 3 N-linked (GlcNAc...) asparagine glycosylation sites follow: Asn862, Asn893, and Asn898. The chain crosses the membrane as a helical span at residues 917 to 937 (MVSFYLSFAAAYVTILIGILA). Residues 938 to 965 (SLSFDSPWSRFWFYKVDAFIKKVRNLLL) are Cytoplasmic-facing.

This sequence belongs to the RLP family.

The protein resides in the cell membrane. In Arabidopsis thaliana (Mouse-ear cress), this protein is Receptor-like protein 15.